A 2773-amino-acid polypeptide reads, in one-letter code: Peramine synthetase A (2773 aa).

Positions 246 to 644 (FEDQVYSQPL…GRKDAQVKIR (399 aa)) are adenylation 1. A Carrier 1 domain is found at 774–850 (QPTCEMEERM…DLAKNCSQTL (77 aa)). An O-(pantetheine 4'-phosphoryl)serine modification is found at Ser-811. Positions 888–1301 (QDAYPCTRLQ…MSSAEDLEQI (414 aa)) are condensation. Residues 1321–1720 (ADQVQARPDS…GRKDTQVKVR (400 aa)) form an adenylation 2 region. Residues 1810–1949 (IGRDFVGWSS…IIQHLASLGS (140 aa)) form a methylation (Met) domain region. A disordered region spans residues 2250-2271 (MLSESLQQKAPPTARKRLPSTA). In terms of domain architecture, Carrier 2 spans 2267–2345 (LPSTAPERAM…HLLQTAAAGV (79 aa)). At Ser-2304 the chain carries O-(pantetheine 4'-phosphoryl)serine. Residues 2397-2715 (TVVLTGANGF…LQDLADTARS (319 aa)) form a thiesterase (TE) domain region.

The protein belongs to the NRP synthetase family. It depends on pantetheine 4'-phosphate as a cofactor.

The catalysed reaction is (S)-1-pyrroline-5-carboxylate + L-arginine + S-adenosyl-L-methionine + 2 ATP = peramine + 2 AMP + S-adenosyl-L-homocysteine + 2 diphosphate + H2O + 2 H(+). Its function is as follows. Nonribosomal peptide synthetase involved in the biosynthesis of peramine, a pyrrolopyrazine synthesized in association with the grass host that protects the plant from insect herbivory. The single multifunctional NRPS perA seems to be responsible for all catalytic steps in the biosynthesis of peramine. The condensation domain of perA is proposed to catalyze formation of a peptide bond between 1-pyrroline-5-carboxylate and arginine. The methylation domain of perA would catalyze the N-methylation of the alpha-amino group of arginine. The reductase domain is proposed to be responsible for reduction of the thioester and the cyclization to form an iminium ion resulting in release from the peptide synthetase. Deprotonation of this intermediate and oxidation of the pyrroline ring would give rise to peramine. This final oxidation to give the pyrrole functionality may be spontaneous. This is Peramine synthetase A from Epichloe festucae (strain Fl1).